We begin with the raw amino-acid sequence, 367 residues long: D-alanine--D-alanine ligase (367 aa).

Residues 150-357 form the ATP-grasp domain; sequence KKLLTAAGLP…YPTLLATMVE (208 aa). Position 178 to 233 (178 to 233) interacts with ATP; the sequence is RERLGLPVFVKPSRGGSSIGVSRVTAWDALPAAIELARRHDPKVIVEAAIPGRELE. Residues D312, E324, and N326 each coordinate Mg(2+).

This sequence belongs to the D-alanine--D-alanine ligase family. Mg(2+) serves as cofactor. Requires Mn(2+) as cofactor.

The protein resides in the cytoplasm. The enzyme catalyses 2 D-alanine + ATP = D-alanyl-D-alanine + ADP + phosphate + H(+). Its pathway is cell wall biogenesis; peptidoglycan biosynthesis. Its function is as follows. Cell wall formation. The protein is D-alanine--D-alanine ligase of Mycolicibacterium vanbaalenii (strain DSM 7251 / JCM 13017 / BCRC 16820 / KCTC 9966 / NRRL B-24157 / PYR-1) (Mycobacterium vanbaalenii).